Reading from the N-terminus, the 391-residue chain is Ferrochelatase (391 aa).

Positions 196 and 281 each coordinate Fe cation.

It belongs to the ferrochelatase family.

Its subcellular location is the cytoplasm. It catalyses the reaction heme b + 2 H(+) = protoporphyrin IX + Fe(2+). The protein operates within porphyrin-containing compound metabolism; protoheme biosynthesis; protoheme from protoporphyrin-IX: step 1/1. Catalyzes the ferrous insertion into protoporphyrin IX. The sequence is that of Ferrochelatase from Prochlorococcus marinus (strain NATL2A).